Reading from the N-terminus, the 157-residue chain is MRCPKCGGNKSSVVDSRQAEDGNTIRRRRECEECQHRFTTYERVEERTLVVVKKDGTREQFSRDKIFNGIIRSAQKRPVSSDEIEEIVNRIEQKVRSQSDNEINSEYIGSLVMDELAELDEITYVRFASVYRSFKDVGELESLLKQITKGSKKKKDK.

Residues 1 to 24 are disordered; sequence MRCPKCGGNKSSVVDSRQAEDGNT. A zinc finger spans residues 3-34; sequence CPKCGGNKSSVVDSRQAEDGNTIRRRRECEEC. In terms of domain architecture, ATP-cone spans 49-139; it reads LVVVKKDGTR…VYRSFKDVGE (91 aa).

Belongs to the NrdR family. The cofactor is Zn(2+).

Its function is as follows. Negatively regulates transcription of bacterial ribonucleotide reductase nrd genes and operons by binding to NrdR-boxes. This Streptococcus sanguinis (strain SK36) protein is Transcriptional repressor NrdR.